The following is a 336-amino-acid chain: G-protein coupled receptor homolog FPV027 (336 aa).

Residues 1–31 (MSMNNITSKMNQDSYGYFQLHMSDFTRVSLS) lie on the Extracellular side of the membrane. Residue asparagine 5 is glycosylated (N-linked (GlcNAc...) asparagine; by host). Residues 32-52 (IVFTLVFLVGIIGNAVIIWFI) form a helical membrane-spanning segment. Over 53–63 (GFKWTKTISTL) the chain is Cytoplasmic. A helical membrane pass occupies residues 64-84 (LFINLALADSLFLIFIPVYTV). Topologically, residues 85–101 (YVLSNFHWYLGEFLCRV) are extracellular. The cysteines at positions 99 and 178 are disulfide-linked. Residues 102–122 (SSFFFTTNMYASMFLLTFISI) traverse the membrane as a helical segment. Topologically, residues 123–143 (DKYLTLTSHRLVYKYRKYRNY) are cytoplasmic. Residues 144–164 (YVCIGAIWCISIALGVPTLYY) traverse the membrane as a helical segment. Residues 165 to 200 (KRVILSSSRNETRCISYYGDDKHTAITIYRIIVCIR) are Extracellular-facing. A glycan (N-linked (GlcNAc...) asparagine; by host) is linked at asparagine 174. Residues 201–221 (FIIGYVFPMTVILLSYALIVY) traverse the membrane as a helical segment. Topologically, residues 222-240 (KVKFINKPPNRSFMITTAS) are cytoplasmic. A helical membrane pass occupies residues 241–261 (IFVFLACWTPHHVLNIISLYG). Over 262-276 (LKSTSMYNYIKESIP) the chain is Extracellular. Residues 277–297 (FVNAIAFVYSAINPIIYIFVI) traverse the membrane as a helical segment. The Cytoplasmic portion of the chain corresponds to 298 to 336 (RLTSTYDSDTMDELRSALLDEETTSTEDCSDIEISDISR).

This sequence belongs to the G-protein coupled receptor 1 family.

The protein localises to the host cell membrane. This Vertebrata (FPV) protein is G-protein coupled receptor homolog FPV027.